A 596-amino-acid chain; its full sequence is NADH-quinone oxidoreductase subunit C/D (596 aa).

An NADH dehydrogenase I subunit C region spans residues 1–186 (MVDIMCNDST…NPFILTKQKE (186 aa)). Positions 210–596 (NFMFLNLGPN…IDFVMSDVDR (387 aa)) are NADH dehydrogenase I subunit D.

In the N-terminal section; belongs to the complex I 30 kDa subunit family. The protein in the C-terminal section; belongs to the complex I 49 kDa subunit family. As to quaternary structure, NDH-1 is composed of 13 different subunits. Subunits NuoB, CD, E, F, and G constitute the peripheral sector of the complex.

It is found in the cell inner membrane. The catalysed reaction is a quinone + NADH + 5 H(+)(in) = a quinol + NAD(+) + 4 H(+)(out). Functionally, NDH-1 shuttles electrons from NADH, via FMN and iron-sulfur (Fe-S) centers, to quinones in the respiratory chain. The immediate electron acceptor for the enzyme in this species is believed to be ubiquinone. Couples the redox reaction to proton translocation (for every two electrons transferred, four hydrogen ions are translocated across the cytoplasmic membrane), and thus conserves the redox energy in a proton gradient. The protein is NADH-quinone oxidoreductase subunit C/D of Blochmanniella pennsylvanica (strain BPEN).